Here is a 342-residue protein sequence, read N- to C-terminus: Renalase (342 aa).

The N-terminal stretch at 1–17 (MSRVLVVGAGLTGSLCA) is a signal peptide. FAD-binding positions include threonine 12, arginine 42, and 61–62 (QY).

The protein belongs to the renalase family. Requires FAD as cofactor. In terms of tissue distribution, expressed predominantly in kidney and testis with lower levels in liver, heart and embryo and weak expression in brain and skeletal muscle.

Its subcellular location is the secreted. It carries out the reaction 1,2-dihydro-beta-NAD + O2 + H(+) = H2O2 + NAD(+). The catalysed reaction is 1,2-dihydro-beta-NADP + O2 + H(+) = H2O2 + NADP(+). It catalyses the reaction 1,6-dihydro-beta-NADP + O2 + H(+) = H2O2 + NADP(+). The enzyme catalyses 1,6-dihydro-beta-NAD + O2 + H(+) = H2O2 + NAD(+). In terms of biological role, catalyzes the oxidation of the less abundant 1,2-dihydro-beta-NAD(P) and 1,6-dihydro-beta-NAD(P) to form beta-NAD(P)(+). The enzyme hormone is secreted by the kidney, and circulates in blood and modulates cardiac function and systemic blood pressure. Lowers blood pressure in vivo by decreasing cardiac contractility and heart rate and preventing a compensatory increase in peripheral vascular tone, suggesting a causal link to the increased plasma catecholamine and heightened cardiovascular risk. High concentrations of catecholamines activate plasma renalase and promotes its secretion and synthesis. The sequence is that of Renalase from Mus musculus (Mouse).